We begin with the raw amino-acid sequence, 259 residues long: Troponin T, fast skeletal muscle (259 aa).

The segment covering 1-36 (MSDEETEQVEEQYEEEEEAQEEEVQEEAPEPEEVQE) has biased composition (acidic residues). The tract at residues 1–62 (MSDEETEQVE…EKVDFDDIQK (62 aa)) is disordered. N-acetylserine is present on Ser-2. Phosphoserine is present on Ser-2. Residues 50-62 (PEGEKVDFDDIQK) show a composition bias toward basic and acidic residues. Position 78 is a phosphoserine (Ser-78). The span at 101–143 (RAERAEQQRIRAEKERERQNRLAEEKARREEEDAKRRAEDDLK) shows a compositional bias: basic and acidic residues. The tract at residues 101–180 (RAERAEQQRI…TAREMKKKIL (80 aa)) is disordered. 3 positions are modified to phosphoserine: Ser-149, Ser-156, and Ser-157. Over residues 171–180 (TAREMKKKIL) the composition is skewed to basic and acidic residues. Ser-193 is modified (phosphoserine). At Tyr-209 the chain carries Phosphotyrosine. The tract at residues 235–259 (RIDQAQKHSKKAGATAKGKVGGRWK) is disordered.

Belongs to the troponin T family.

Its function is as follows. Troponin T is the tropomyosin-binding subunit of troponin, the thin filament regulatory complex which confers calcium-sensitivity to striated muscle actomyosin ATPase activity. The polypeptide is Troponin T, fast skeletal muscle (Tnnt3) (Rattus norvegicus (Rat)).